The chain runs to 231 residues: MEEITINIDKIKINDDWKEFLRDEFQKKYFLEIKKQYLNAINQNIIIYPPANLIFNAFNLCPLKEIKIIILGQDPYHQPNQAMGLSFSVPKNVKIPPSLNNIFKELQNDLNITPAKSGDLSSWAKQGVLLLNSILSVEANKAASHSSWGWQEFSDAIIHKLSNEKSGLVFMLWGNYAKSKEILIDNTKHLILKAAHPSPLARTGFLGCKHFSKANEFLKKVGKIPIDWKIV.

The active-site Proton acceptor is the Asp74.

This sequence belongs to the uracil-DNA glycosylase (UDG) superfamily. UNG family.

The protein resides in the cytoplasm. It catalyses the reaction Hydrolyzes single-stranded DNA or mismatched double-stranded DNA and polynucleotides, releasing free uracil.. In terms of biological role, excises uracil residues from the DNA which can arise as a result of misincorporation of dUMP residues by DNA polymerase or due to deamination of cytosine. In Campylobacter jejuni subsp. jejuni serotype O:23/36 (strain 81-176), this protein is Uracil-DNA glycosylase.